The following is a 359-amino-acid chain: Phosphoserine aminotransferase (359 aa).

L-glutamate is bound at residue R42. Pyridoxal 5'-phosphate-binding positions include 76–77 (AS), W102, T152, D171, and Q194. N6-(pyridoxal phosphate)lysine is present on K195. 236 to 237 (NT) lines the pyridoxal 5'-phosphate pocket.

It belongs to the class-V pyridoxal-phosphate-dependent aminotransferase family. SerC subfamily. As to quaternary structure, homodimer. Pyridoxal 5'-phosphate serves as cofactor.

The protein localises to the cytoplasm. It catalyses the reaction O-phospho-L-serine + 2-oxoglutarate = 3-phosphooxypyruvate + L-glutamate. The enzyme catalyses 4-(phosphooxy)-L-threonine + 2-oxoglutarate = (R)-3-hydroxy-2-oxo-4-phosphooxybutanoate + L-glutamate. Its pathway is amino-acid biosynthesis; L-serine biosynthesis; L-serine from 3-phospho-D-glycerate: step 2/3. It functions in the pathway cofactor biosynthesis; pyridoxine 5'-phosphate biosynthesis; pyridoxine 5'-phosphate from D-erythrose 4-phosphate: step 3/5. Functionally, catalyzes the reversible conversion of 3-phosphohydroxypyruvate to phosphoserine and of 3-hydroxy-2-oxo-4-phosphonooxybutanoate to phosphohydroxythreonine. The chain is Phosphoserine aminotransferase from Vesicomyosocius okutanii subsp. Calyptogena okutanii (strain HA).